The sequence spans 569 residues: MAGGVDGPIGIPFPDHSSDILSGLNEQRTQGLLCDVVILVEGREFPTHRSVLAACSQYFKKLFTSGAVVDQQNVYEIDFVSAEALTALMDFAYTATLTVSTANVGDILSAARLLEIPAVSHVCADLLERQILAADDVGDASQPDGAGPTDQRNLLRAKEYLEFFRSNPMNSLPPTAFPWSGFGAPDDDLDATKEAVAAAVAAVAAGDCNGLDFYGPGPPADRPPAGDGDEGDSTPGLWPERDEDAPPGGLFPPPTAPPATTQNGHYGRAGAGTGEEEAAALSEAAPEPGDSPGFLSGAAEGEDGDAADVDGLAASTLLQQMMSSVGRAGDSDEESRTDDKGVMDYYLKYFSGAHEGDVYPAWSQKGEKKIRAKAFQKCPICEKVIQGAGKLPRHIRTHTGEKPYECNICKVRFTRQDKLKVHMRKHTGEKPYLCQQCGAAFAHNYDLKNHMRVHTGLRPYQCDSCCKTFVRSDHLHRHLKKDGCNGVPSRRGRKPRVRGVPPDVPAGAGAPPGLPDAPRNGQEKHFKDEEEDEEEASPDGSGRLNVAGSGGDDGAGGPAVATAEGNFAT.

The region spanning 34-101 is the BTB domain; the sequence is CDVVILVEGR…AYTATLTVST (68 aa). The segment at 214 to 304 is disordered; the sequence is YGPGPPADRP…LSGAAEGEDG (91 aa). Positions 275–569 are mediates interaction with KHDRBS1; the sequence is EEEAAALSEA…VATAEGNFAT (295 aa). Low complexity predominate over residues 279–288; the sequence is AALSEAAPEP. Phosphoserine occurs at positions 331 and 335. A mediates interaction with RELA region spans residues 343–569; the sequence is MDYYLKYFSG…VATAEGNFAT (227 aa). Positions 371 to 569 are mediates interaction with SMAD4; that stretch reads RAKAFQKCPI…VATAEGNFAT (199 aa). 2 C2H2-type zinc fingers span residues 376–398 and 404–426; these read QKCP…IRTH and YECN…MRKH. Residue K430 forms a Glycyl lysine isopeptide (Lys-Gly) (interchain with G-Cter in SUMO2) linkage. A C2H2-type 3 zinc finger spans residues 432–454; sequence YLCQQCGAAFAHNYDLKNHMRVH. Residues 460-484 form a C2H2-type 4; atypical zinc finger; it reads YQCDSCCKTFVRSDHLHRHLKKDGC. A disordered region spans residues 480–569; that stretch reads KKDGCNGVPS…VATAEGNFAT (90 aa). The span at 498 to 519 shows a compositional bias: low complexity; that stretch reads RGVPPDVPAGAGAPPGLPDAPR. K527 participates in a covalent cross-link: Glycyl lysine isopeptide (Lys-Gly) (interchain with G-Cter in SUMO2). The residue at position 537 (S537) is a Phosphoserine. Residues 548–557 are compositionally biased toward gly residues; the sequence is GSGGDDGAGG.

Homodimer. Interacts with BCL6. Interacts with RELA; involved in the control by RELA of the accessibility of target gene promoters. Interacts with AR (via NR LBD domain); the interaction is direct and androgen-dependent. Interacts with NCOR1. Interacts with NCOR2. Interacts with SMAD4; the interaction is direct and stimulated by TGFB1. Interacts with HDAC1. Interacts with SP1; ZBTB7A prevents the binding to GC-rich motifs in promoters and represses the transcriptional activity of SP1. Interacts with the DNA-dependent protein kinase complex/DNA-PKc. Interacts with KHDRBS1; negatively regulates KHDRBS1 splicing activity. Post-translationally, sumoylated. Undergoes sumoylation with SUMO1 that may regulate its transcriptional activity. Widely expressed. In normal thymus, expressed in medullary epithelial cells and Hassle's corpuscles (at protein level). In the spleen, mainly expressed in the white pulp germinal centers (at protein level). Up-regulated in thymic lymphomas.

Its subcellular location is the nucleus. Transcription factor that represses the transcription of a wide range of genes involved in cell proliferation and differentiation. Directly and specifically binds to the consensus sequence 5'-[GA][CA]GACCCCCCCCC-3' and represses transcription both by regulating the organization of chromatin and through the direct recruitment of transcription factors to gene regulatory regions. Negatively regulates SMAD4 transcriptional activity in the TGF-beta signaling pathway through these two mechanisms. That is, recruits the chromatin regulator HDAC1 to the SMAD4-DNA complex and in parallel prevents the recruitment of the transcriptional activators CREBBP and EP300. Collaborates with transcription factors like RELA to modify the accessibility of gene transcription regulatory regions to secondary transcription factors. Also directly interacts with transcription factors like SP1 to prevent their binding to DNA. Functions as an androgen receptor/AR transcriptional corepressor by recruiting NCOR1 and NCOR2 to the androgen response elements/ARE on target genes. Thereby, negatively regulates androgen receptor signaling and androgen-induced cell proliferation. Involved in the switch between fetal and adult globin expression during erythroid cells maturation. Through its interaction with the NuRD complex regulates chromatin at the fetal globin genes to repress their transcription. Specifically represses the transcription of the tumor suppressor ARF isoform from the CDKN2A gene. Efficiently abrogates E2F1-dependent CDKN2A transactivation. Regulates chondrogenesis through the transcriptional repression of specific genes via a mechanism that also requires histone deacetylation. Regulates cell proliferation through the transcriptional regulation of genes involved in glycolysis. Involved in adipogenesis through the regulation of genes involved in adipocyte differentiation. Plays a key role in the differentiation of lymphoid progenitors into B and T lineages. Promotes differentiation towards the B lineage by inhibiting the T-cell instructive Notch signaling pathway through the specific transcriptional repression of Notch downstream target genes. Also regulates osteoclast differentiation. May also play a role, independently of its transcriptional activity, in double-strand break repair via classical non-homologous end joining/cNHEJ. Recruited to double-strand break sites on damage DNA, interacts with the DNA-dependent protein kinase complex and directly regulates its stability and activity in DNA repair. May also modulate the splicing activity of KHDRBS1 toward BCL2L1 in a mechanism which is histone deacetylase-dependent and thereby negatively regulates the pro-apoptotic effect of KHDRBS1. This is Zinc finger and BTB domain-containing protein 7A from Mus musculus (Mouse).